A 64-amino-acid chain; its full sequence is Large ribosomal subunit protein bL33c (64 aa).

It belongs to the bacterial ribosomal protein bL33 family.

The protein localises to the plastid. It is found in the chloroplast. This Thalassiosira pseudonana (Marine diatom) protein is Large ribosomal subunit protein bL33c.